Reading from the N-terminus, the 386-residue chain is 8-amino-7-oxononanoate synthase (386 aa).

Arg-19 lines the substrate pocket. 106–107 contributes to the pyridoxal 5'-phosphate binding site; sequence GY. His-131 provides a ligand contact to substrate. The pyridoxal 5'-phosphate site is built by Ser-177, His-205, and Thr-233. An N6-(pyridoxal phosphate)lysine modification is found at Lys-236. Thr-350 contacts substrate.

The protein belongs to the class-II pyridoxal-phosphate-dependent aminotransferase family. BioF subfamily. Homodimer. The cofactor is pyridoxal 5'-phosphate.

The enzyme catalyses 6-carboxyhexanoyl-[ACP] + L-alanine + H(+) = (8S)-8-amino-7-oxononanoate + holo-[ACP] + CO2. It functions in the pathway cofactor biosynthesis; biotin biosynthesis. In terms of biological role, catalyzes the decarboxylative condensation of pimeloyl-[acyl-carrier protein] and L-alanine to produce 8-amino-7-oxononanoate (AON), [acyl-carrier protein], and carbon dioxide. This is 8-amino-7-oxononanoate synthase from Alcanivorax borkumensis (strain ATCC 700651 / DSM 11573 / NCIMB 13689 / SK2).